The sequence spans 660 residues: ATPase-like fidgetin (660 aa).

2 disordered regions span residues 141–186 and 209–334; these read KQIY…EDPF and ALSS…ADSK. Residues 145 to 161 show a composition bias toward low complexity; the sequence is SKHSPPSTSTSSIVSSS. Ser177 carries the phosphoserine modification. A compositionally biased stretch (polar residues) spans 213–239; that stretch reads DTGRSATMNSTTFPTAMKSQSTTKPTL. Over residues 240–255 the composition is skewed to low complexity; it reads SNSVSSPSIQVSNNQN. Residues 301-313 are compositionally biased toward polar residues; the sequence is LNSSHDTLGSSTR. Over residues 314-333 the composition is skewed to low complexity; it reads PSSADTAGSPATSPPATADS. 419–426 provides a ligand contact to ATP; it reads GPPGTGKT.

The protein belongs to the AAA ATPase family.

It localises to the nucleus. In Schizosaccharomyces pombe (strain 972 / ATCC 24843) (Fission yeast), this protein is ATPase-like fidgetin (alf1).